The primary structure comprises 337 residues: Glyceraldehyde-3-phosphate dehydrogenase 1 (337 aa).

Residues 11-12 (RI), Asp-33, and Arg-78 each bind NAD(+). D-glyceraldehyde 3-phosphate contacts are provided by residues 149 to 151 (SCT), Thr-180, 209 to 210 (TG), and Arg-232. Cys-150 acts as the Nucleophile in catalysis. Asn-318 contributes to the NAD(+) binding site.

Belongs to the glyceraldehyde-3-phosphate dehydrogenase family. Homotetramer.

Its subcellular location is the cytoplasm. The catalysed reaction is D-glyceraldehyde 3-phosphate + phosphate + NAD(+) = (2R)-3-phospho-glyceroyl phosphate + NADH + H(+). It functions in the pathway carbohydrate degradation; glycolysis; pyruvate from D-glyceraldehyde 3-phosphate: step 1/5. This chain is Glyceraldehyde-3-phosphate dehydrogenase 1 (gpd1), found in Agaricus bisporus (White button mushroom).